The following is a 242-amino-acid chain: Glucosamine-6-phosphate deaminase (242 aa).

The active-site Proton acceptor; for enolization step is the aspartate 71. Asparagine 142 functions as the For ring-opening step in the catalytic mechanism. The active-site Proton acceptor; for ring-opening step is histidine 144. Catalysis depends on glutamate 149, which acts as the For ring-opening step.

It belongs to the glucosamine/galactosamine-6-phosphate isomerase family. NagB subfamily.

The enzyme catalyses alpha-D-glucosamine 6-phosphate + H2O = beta-D-fructose 6-phosphate + NH4(+). It participates in amino-sugar metabolism; N-acetylneuraminate degradation; D-fructose 6-phosphate from N-acetylneuraminate: step 5/5. In terms of biological role, catalyzes the reversible isomerization-deamination of glucosamine 6-phosphate (GlcN6P) to form fructose 6-phosphate (Fru6P) and ammonium ion. The sequence is that of Glucosamine-6-phosphate deaminase from Malacoplasma penetrans (strain HF-2) (Mycoplasma penetrans).